The sequence spans 511 residues: Ribonuclease Y (511 aa).

A helical transmembrane segment spans residues 3–23 (VGILIGIIILGVVGFIQYTLI). Residues 201-286 (TVHVVALPND…EMVERAIKDV (86 aa)) form the KH domain. The 94-residue stretch at 327-420 (VLKHSIEVSY…VQAADAISAA (94 aa)) folds into the HD domain.

This sequence belongs to the RNase Y family.

The protein localises to the cell membrane. Endoribonuclease that initiates mRNA decay. In Clostridium perfringens (strain ATCC 13124 / DSM 756 / JCM 1290 / NCIMB 6125 / NCTC 8237 / Type A), this protein is Ribonuclease Y.